A 527-amino-acid chain; its full sequence is Bacillolysin (527 aa).

A signal peptide spans 1–28 (MKKSYLATSLTLSIAVGVSGFTSVPAFA). A propeptide spans 29–223 (KTKIDYHKQW…VINKYNMLDH (195 aa)) (activation peptide). Ca(2+) is bound by residues Asp276, Asp278, and Asp354. A Zn(2+)-binding site is contributed by His358. The active site involves Glu359. Zn(2+) is bound by residues His362 and Glu382. Residues Asp393, Asn394, Asp396, Glu401, Tyr404, Thr405, and Asp411 each coordinate Ca(2+). Residue His442 is the Proton donor of the active site.

Belongs to the peptidase M4 family. Ca(2+) is required as a cofactor. It depends on Zn(2+) as a cofactor.

It is found in the secreted. It carries out the reaction Similar, but not identical, to that of thermolysin.. Functionally, extracellular zinc metalloprotease. The chain is Bacillolysin (npr) from Brevibacillus brevis (Bacillus brevis).